A 252-amino-acid chain; its full sequence is Ubiquinone/menaquinone biosynthesis C-methyltransferase UbiE (252 aa).

Residues threonine 75, aspartate 96, and 123–124 contribute to the S-adenosyl-L-methionine site; that span reads NA.

Belongs to the class I-like SAM-binding methyltransferase superfamily. MenG/UbiE family.

The catalysed reaction is a 2-demethylmenaquinol + S-adenosyl-L-methionine = a menaquinol + S-adenosyl-L-homocysteine + H(+). It catalyses the reaction a 2-methoxy-6-(all-trans-polyprenyl)benzene-1,4-diol + S-adenosyl-L-methionine = a 5-methoxy-2-methyl-3-(all-trans-polyprenyl)benzene-1,4-diol + S-adenosyl-L-homocysteine + H(+). It functions in the pathway quinol/quinone metabolism; menaquinone biosynthesis; menaquinol from 1,4-dihydroxy-2-naphthoate: step 2/2. The protein operates within cofactor biosynthesis; ubiquinone biosynthesis. In terms of biological role, methyltransferase required for the conversion of demethylmenaquinol (DMKH2) to menaquinol (MKH2) and the conversion of 2-polyprenyl-6-methoxy-1,4-benzoquinol (DDMQH2) to 2-polyprenyl-3-methyl-6-methoxy-1,4-benzoquinol (DMQH2). The sequence is that of Ubiquinone/menaquinone biosynthesis C-methyltransferase UbiE from Methylobacterium nodulans (strain LMG 21967 / CNCM I-2342 / ORS 2060).